A 78-amino-acid chain; its full sequence is MSEVVVKEQLEQYISKIERLEQEKADLLEEIKNIFQDASSHGFDVKAMKSILKLKKLDKDKLAEQDAMLELYRDTLGI.

This sequence belongs to the UPF0335 family.

The sequence is that of UPF0335 protein A1E_00570 from Rickettsia canadensis (strain McKiel).